Here is a 479-residue protein sequence, read N- to C-terminus: Ankyrin repeat, SAM and basic leucine zipper domain-containing protein 1 (479 aa).

Ser-22 and Ser-24 each carry phosphoserine. ANK repeat units lie at residues 49-78, 82-111, 114-148, 152-181, 185-214, and 218-247; these read EKNETFKKALTTGDILLVKELLNSGISVDS, YGWTPLMYAASVSNVELVRVLLDRGANASF, DKQTILITACSARGSEEQILKCVELLLSRNADPNV, RLMTPIMYAARDGHTQVVALLVAHGAEVNT, NGYTALTWAARQGHKNVVLKLLELGANKML, and DGKTPSEIAKRNKHVEIFSFLSLTLNPLEG. Residues 276–338 form the SAM domain; it reads SYTALGDLEI…KILDALKELQ (63 aa).

Interacts with DDX4, PIWIL1, RANBP9 and TDRD1.

The protein localises to the cytoplasm. Plays a central role during spermatogenesis by repressing transposable elements and preventing their mobilization, which is essential for the germline integrity. Acts via the piRNA metabolic process, which mediates the repression of transposable elements during meiosis by forming complexes composed of piRNAs and Piwi proteins and governs the methylation and subsequent repression of transposons. Its association with pi-bodies suggests a participation in the primary piRNAs metabolic process. Required prior to the pachytene stage to facilitate the production of multiple types of piRNAs, including those associated with repeats involved in the regulation of retrotransposons. May act by mediating protein-protein interactions during germ cell maturation. This chain is Ankyrin repeat, SAM and basic leucine zipper domain-containing protein 1 (ASZ1), found in Rhinolophus ferrumequinum (Greater horseshoe bat).